The primary structure comprises 238 residues: MORN repeat-containing protein 3 (238 aa).

MORN repeat units lie at residues 38 to 60 (YTGEWLNNLRHGKGTYMWKRRKS), 62 to 84 (YEGDWKCGERSGFGTYSVQDSNT), 91 to 113 (YSGYWDNDKKHGYGTHFYSAKEY), 114 to 136 (YEGEWKCGKRCGWGRMYFANGDI), 137 to 159 (YEGEWLEDKHSGQGMLCLANENR), 160 to 182 (YEGSWKDGKKHGPGKFYYLNKGQ), and 184 to 205 (YEGVWVEDIPKCGTMVDFGRTE).

It is found in the cytoplasmic vesicle. It localises to the secretory vesicle. The protein resides in the acrosome. Assembles a suppression complex (suppresome) by tethering SIRT1 and MDM2 to regulate composite modifications of p53/TP53. Confers both deacetylation-mediated functional inactivation, by SIRT1, and ubiquitination-dependent degradation, by MDM2, of p53/TP53, promoting a proliferative and cell survival behaviors. May play a role in the regulation of spermatogenesis. The protein is MORN repeat-containing protein 3 (morn3) of Xenopus laevis (African clawed frog).